Reading from the N-terminus, the 337-residue chain is Dihydroorotate dehydrogenase (quinone) (337 aa).

FMN-binding positions include 61–65 (AGLDK) and threonine 85. Lysine 65 serves as a coordination point for substrate. 110-114 (NRMGF) contacts substrate. FMN contacts are provided by asparagine 138 and asparagine 171. Asparagine 171 contributes to the substrate binding site. The active-site Nucleophile is the serine 174. A substrate-binding site is contributed by asparagine 176. Residues lysine 216 and threonine 244 each contribute to the FMN site. Residue 245–246 (NT) coordinates substrate. FMN-binding positions include glycine 267, glycine 296, and 317–318 (YS).

The protein belongs to the dihydroorotate dehydrogenase family. Type 2 subfamily. Monomer. It depends on FMN as a cofactor.

It localises to the cell membrane. It catalyses the reaction (S)-dihydroorotate + a quinone = orotate + a quinol. It participates in pyrimidine metabolism; UMP biosynthesis via de novo pathway; orotate from (S)-dihydroorotate (quinone route): step 1/1. Its function is as follows. Catalyzes the conversion of dihydroorotate to orotate with quinone as electron acceptor. The chain is Dihydroorotate dehydrogenase (quinone) from Thiobacillus denitrificans (strain ATCC 25259 / T1).